The primary structure comprises 560 residues: MKVWMAILISILCWQSSAWAVCPAWSPARAQEEISRLQQQIKQWDDDYWKEGKSEVEDGVYDQLSARLTQWQRCFGNETRDVMMPPLNGAVMHPVAHTGVRKMADKNALSLWMRERSDLWVQPKVDGVAVTLVYRDGKLNKAISRGNGLKGEDWTQKVRLISAVPQTVSGPLANSTLQGEIFLQREGHIQQQMGGINARAKVAGLMMRQGNSDTLNSLAVFVWAWPDGPHLMTDRLKDLATAGFTLTQTYTRAVKNADEVAHVRNEWWKAKLPFVTDGVVVRAAKEPESRHWLPGQAEWLVAWKYQPVAQVAEVKAIQFAVGKSGKISVVASLAPVMLDDKKVQRVNIGSVRRWQEWDIAPGDQILVSLAGQGIPRIDDVVWRGAERTKPTPPENRFNSLTCYFASDVCQEQFISRLVWLGSKQVLGLDGIGEAGWRALHQTHRFEHIFSWLLLTPEQLQNTPGIAKSKSAQLWHQFNLARQQPFTRWVMAMGIPLTRAALNASDERSWSQLLFSTEQFWQQQPGTGSGRARQVIEWKENAQIKKLGSWLAAQQITGFEP.

Lys-124 acts as the N6-AMP-lysine intermediate in catalysis.

The protein belongs to the NAD-dependent DNA ligase family. LigB subfamily.

The catalysed reaction is NAD(+) + (deoxyribonucleotide)n-3'-hydroxyl + 5'-phospho-(deoxyribonucleotide)m = (deoxyribonucleotide)n+m + AMP + beta-nicotinamide D-nucleotide.. Its function is as follows. Catalyzes the formation of phosphodiester linkages between 5'-phosphoryl and 3'-hydroxyl groups in double-stranded DNA using NAD as a coenzyme and as the energy source for the reaction. The protein is DNA ligase B of Escherichia coli O1:K1 / APEC.